The following is a 187-amino-acid chain: Orotate phosphoribosyltransferase (187 aa).

5-phospho-alpha-D-ribose 1-diphosphate contacts are provided by residues arginine 99, lysine 100, lysine 103, histidine 105, and 125–133 (DDVITTGGS). Orotate-binding residues include threonine 129 and arginine 157.

It belongs to the purine/pyrimidine phosphoribosyltransferase family. PyrE subfamily. As to quaternary structure, homodimer. It depends on Mg(2+) as a cofactor.

The enzyme catalyses orotidine 5'-phosphate + diphosphate = orotate + 5-phospho-alpha-D-ribose 1-diphosphate. The protein operates within pyrimidine metabolism; UMP biosynthesis via de novo pathway; UMP from orotate: step 1/2. Its function is as follows. Catalyzes the transfer of a ribosyl phosphate group from 5-phosphoribose 1-diphosphate to orotate, leading to the formation of orotidine monophosphate (OMP). The sequence is that of Orotate phosphoribosyltransferase from Leptospira borgpetersenii serovar Hardjo-bovis (strain L550).